The chain runs to 649 residues: Phosphomethylpyrimidine synthase (649 aa).

Substrate-binding positions include asparagine 235, methionine 264, tyrosine 293, histidine 329, 349–351 (SRG), 390–393 (DGLR), and glutamate 429. Histidine 433 is a Zn(2+) binding site. Tyrosine 456 provides a ligand contact to substrate. Histidine 497 contributes to the Zn(2+) binding site. Cysteine 577, cysteine 580, and cysteine 585 together coordinate [4Fe-4S] cluster. Positions 620 to 649 (GMRQKSQEFRDTGSELYHPAVGAKEAQLEE) are disordered. Positions 621-632 (MRQKSQEFRDTG) are enriched in basic and acidic residues.

This sequence belongs to the ThiC family. Homodimer. [4Fe-4S] cluster serves as cofactor.

The catalysed reaction is 5-amino-1-(5-phospho-beta-D-ribosyl)imidazole + S-adenosyl-L-methionine = 4-amino-2-methyl-5-(phosphooxymethyl)pyrimidine + CO + 5'-deoxyadenosine + formate + L-methionine + 3 H(+). It functions in the pathway cofactor biosynthesis; thiamine diphosphate biosynthesis. Functionally, catalyzes the synthesis of the hydroxymethylpyrimidine phosphate (HMP-P) moiety of thiamine from aminoimidazole ribotide (AIR) in a radical S-adenosyl-L-methionine (SAM)-dependent reaction. This is Phosphomethylpyrimidine synthase from Vibrio atlanticus (strain LGP32) (Vibrio splendidus (strain Mel32)).